The following is a 355-amino-acid chain: Histidinol-phosphate aminotransferase (355 aa).

Position 211 is an N6-(pyridoxal phosphate)lysine (lysine 211).

It belongs to the class-II pyridoxal-phosphate-dependent aminotransferase family. Histidinol-phosphate aminotransferase subfamily. Homodimer. Pyridoxal 5'-phosphate serves as cofactor.

The enzyme catalyses L-histidinol phosphate + 2-oxoglutarate = 3-(imidazol-4-yl)-2-oxopropyl phosphate + L-glutamate. The protein operates within amino-acid biosynthesis; L-histidine biosynthesis; L-histidine from 5-phospho-alpha-D-ribose 1-diphosphate: step 7/9. The polypeptide is Histidinol-phosphate aminotransferase (Aeromonas salmonicida (strain A449)).